We begin with the raw amino-acid sequence, 356 residues long: Glutamine synthetase nodule isozyme (356 aa).

The GS beta-grasp domain occupies 19 to 99 (IIAEYIWVGG…VICDVYTPAG (81 aa)). The 251-residue stretch at 106–356 (KRHNAAKIFS…IAETTLLWKP (251 aa)) folds into the GS catalytic domain.

This sequence belongs to the glutamine synthetase family. Homooctamer. Found at highest levels in root nodules.

The protein resides in the cytoplasm. It carries out the reaction L-glutamate + NH4(+) + ATP = L-glutamine + ADP + phosphate + H(+). This chain is Glutamine synthetase nodule isozyme (GS1), found in Medicago sativa (Alfalfa).